A 103-amino-acid polypeptide reads, in one-letter code: MADQKIQIRLKAFDCRLIDRSAGEIVETAKRTGAHVRGPIPLPTKIERCTILVSPHADKDARDQYETCTYKRVLYIVDPNDKTVDALMKLELAAGVDVQIKLT.

It belongs to the universal ribosomal protein uS10 family. In terms of assembly, part of the 30S ribosomal subunit.

Involved in the binding of tRNA to the ribosomes. In Xylella fastidiosa (strain 9a5c), this protein is Small ribosomal subunit protein uS10.